The primary structure comprises 711 residues: Probable cyclic nucleotide-gated ion channel 10 (711 aa).

The Cytoplasmic segment spans residues 1 to 81; that stretch reads MAFSHDNRVR…QDSFLQNWNK (81 aa). Residues 82–102 traverse the membrane as a helical segment; sequence IFLFACVVALAIDPLFFYIPI. At 103–116 the chain is on the extracellular side; it reads VDSARHCLTLDSKL. The chain crosses the membrane as a helical span at residues 117 to 137; the sequence is EIAASLLRTLIDAFYIIHIVF. The Cytoplasmic segment spans residues 138–170; the sequence is QFRTAYIAPSSRVFGRGELVDDAKAIALKYLSS. Residues 171–191 form a helical membrane-spanning segment; that stretch reads YFIIDLLSILPLPQIVVLAVI. Residues 192 to 204 lie on the Extracellular side of the membrane; the sequence is PSVNQPVSLLTKD. Residues 205-225 traverse the membrane as a helical segment; it reads YLKFSIIAQYVPRILRMYPLY. Topologically, residues 226 to 243 are cytoplasmic; it reads TEVTRTSGIVTETAWAGA. The chain crosses the membrane as a helical span at residues 244–264; that stretch reads AWNLSLYMLASHVFGALWYLI. The Extracellular segment spans residues 265-366; sequence SVEREDRCWQ…GQNLQTSKFV (102 aa). Residues 367-387 form a helical membrane-spanning segment; the sequence is GEIIFAISICISGLVLFALLI. At 388–711 the chain is on the cytoplasmic side; the sequence is GNMQKYLEST…DFTANHTTDP (324 aa). A nucleoside 3',5'-cyclic phosphate-binding positions include 473 to 603 and E544; that span reads LFEI…TFRF. Residues 589–604 form a calmodulin-binding region; that stretch reads FRRLHSKQLQHTFRFY. Residues 609-638 form the IQ domain; it reads RTWSVSFIQAAWRRYCRRKLAKSLRDEEDR. Residues 689-711 are disordered; sequence YTLPLLPQKPTEPDFTANHTTDP.

This sequence belongs to the cyclic nucleotide-gated cation channel (TC 1.A.1.5) family. As to quaternary structure, homotetramer or heterotetramer.

Its subcellular location is the cell membrane. In terms of biological role, probable cyclic nucleotide-gated ion channel. The chain is Probable cyclic nucleotide-gated ion channel 10 (CNGC10) from Arabidopsis thaliana (Mouse-ear cress).